An 88-amino-acid polypeptide reads, in one-letter code: LYR motif-containing protein 2 (88 aa).

A mitochondrion-targeting transit peptide spans 1 to 19 (MAASRLPPATLTLKQFVRR).

Belongs to the complex I LYR family.

The protein localises to the mitochondrion. In terms of biological role, involved in efficient integration of the N-module into mitochondrial respiratory chain complex I. The polypeptide is LYR motif-containing protein 2 (LYRM2) (Homo sapiens (Human)).